We begin with the raw amino-acid sequence, 379 residues long: Bifunctional enzyme IspD/IspF (379 aa).

Residues 1-213 (MSQVSLVVMG…QGFEPPFGGC (213 aa)) form a 2-C-methyl-D-erythritol 4-phosphate cytidylyltransferase region. A 2-C-methyl-D-erythritol 2,4-cyclodiphosphate synthase region spans residues 214–379 (YGGSGFDVHA…DWTKHACFNR (166 aa)). A divalent metal cation contacts are provided by D220 and H222. 4-CDP-2-C-methyl-D-erythritol 2-phosphate-binding positions include 220–222 (DVH) and 246–247 (HS). H254 contacts a divalent metal cation. Residues 268–270 (DIG), 273–277 (FPDSD), 344–347 (TTTE), F351, and R354 each bind 4-CDP-2-C-methyl-D-erythritol 2-phosphate.

It in the N-terminal section; belongs to the IspD/TarI cytidylyltransferase family. IspD subfamily. The protein in the C-terminal section; belongs to the IspF family. The cofactor is a divalent metal cation.

It carries out the reaction 2-C-methyl-D-erythritol 4-phosphate + CTP + H(+) = 4-CDP-2-C-methyl-D-erythritol + diphosphate. The catalysed reaction is 4-CDP-2-C-methyl-D-erythritol 2-phosphate = 2-C-methyl-D-erythritol 2,4-cyclic diphosphate + CMP. The protein operates within isoprenoid biosynthesis; isopentenyl diphosphate biosynthesis via DXP pathway; isopentenyl diphosphate from 1-deoxy-D-xylulose 5-phosphate: step 2/6. Its pathway is isoprenoid biosynthesis; isopentenyl diphosphate biosynthesis via DXP pathway; isopentenyl diphosphate from 1-deoxy-D-xylulose 5-phosphate: step 4/6. Functionally, bifunctional enzyme that catalyzes the formation of 4-diphosphocytidyl-2-C-methyl-D-erythritol from CTP and 2-C-methyl-D-erythritol 4-phosphate (MEP) (IspD), and catalyzes the conversion of 4-diphosphocytidyl-2-C-methyl-D-erythritol 2-phosphate (CDP-ME2P) to 2-C-methyl-D-erythritol 2,4-cyclodiphosphate (ME-CPP) with a corresponding release of cytidine 5-monophosphate (CMP) (IspF). This Wolinella succinogenes (strain ATCC 29543 / DSM 1740 / CCUG 13145 / JCM 31913 / LMG 7466 / NCTC 11488 / FDC 602W) (Vibrio succinogenes) protein is Bifunctional enzyme IspD/IspF.